A 218-amino-acid polypeptide reads, in one-letter code: Small ribosomal subunit protein uS3c (218 aa).

In terms of domain architecture, KH type-2 spans 39 to 109 (IRNYVKVNLS…QIRINVTELK (71 aa)).

It belongs to the universal ribosomal protein uS3 family. Part of the 30S ribosomal subunit.

Its subcellular location is the plastid. The protein localises to the chloroplast. This Rhodomonas salina (Cryptomonas salina) protein is Small ribosomal subunit protein uS3c (rps3).